A 231-amino-acid chain; its full sequence is 5'-methylthioadenosine/S-adenosylhomocysteine nucleosidase (231 aa).

The Proton acceptor role is filled by Glu-13. Residues Gly-79, Met-153, and 174-175 (ME) contribute to the substrate site. The active-site Proton donor is the Asp-198.

Belongs to the PNP/UDP phosphorylase family. MtnN subfamily.

It carries out the reaction S-adenosyl-L-homocysteine + H2O = S-(5-deoxy-D-ribos-5-yl)-L-homocysteine + adenine. The enzyme catalyses S-methyl-5'-thioadenosine + H2O = 5-(methylsulfanyl)-D-ribose + adenine. The catalysed reaction is 5'-deoxyadenosine + H2O = 5-deoxy-D-ribose + adenine. It functions in the pathway amino-acid biosynthesis; L-methionine biosynthesis via salvage pathway; S-methyl-5-thio-alpha-D-ribose 1-phosphate from S-methyl-5'-thioadenosine (hydrolase route): step 1/2. Catalyzes the irreversible cleavage of the glycosidic bond in both 5'-methylthioadenosine (MTA) and S-adenosylhomocysteine (SAH/AdoHcy) to adenine and the corresponding thioribose, 5'-methylthioribose and S-ribosylhomocysteine, respectively. Also cleaves 5'-deoxyadenosine, a toxic by-product of radical S-adenosylmethionine (SAM) enzymes, into 5-deoxyribose and adenine. The protein is 5'-methylthioadenosine/S-adenosylhomocysteine nucleosidase of Halalkalibacterium halodurans (strain ATCC BAA-125 / DSM 18197 / FERM 7344 / JCM 9153 / C-125) (Bacillus halodurans).